The primary structure comprises 283 residues: Undecaprenyl-diphosphatase (283 aa).

The next 8 membrane-spanning stretches (helical) occupy residues 4-24, 45-65, 91-111, 118-138, 153-173, 194-214, 228-248, and 258-278; these read LLIL…FLPI, ADLF…YEYW, QLGL…FTLA, LFNP…IFYV, VSLK…IPGT, AEFS…LDLL, ILGV…RWLV, and IFAW…WIFG.

This sequence belongs to the UppP family.

Its subcellular location is the cell inner membrane. It catalyses the reaction di-trans,octa-cis-undecaprenyl diphosphate + H2O = di-trans,octa-cis-undecaprenyl phosphate + phosphate + H(+). Catalyzes the dephosphorylation of undecaprenyl diphosphate (UPP). Confers resistance to bacitracin. The polypeptide is Undecaprenyl-diphosphatase (Psychrobacter sp. (strain PRwf-1)).